Reading from the N-terminus, the 685-residue chain is Kinesin-like protein KIP2 (685 aa).

2 disordered regions span residues 11–46 (EHVGSAGASLPQTPGSRSFALGAHPGPQKRIGGPAQ) and 63–101 (SRPSSPYMQASPLLKGSESGGSAGSPQSPDAPSSASGAS). Low complexity predominate over residues 86–101 (GSPQSPDAPSSASGAS). Residues 113-446 (NVSVAIRIKP…VRFASRAKNI (334 aa)) form the Kinesin motor domain. Position 185–192 (185–192 (GMTGSGKT)) interacts with ATP. 2 coiled-coil regions span residues 464 to 486 (IIQNLRKQLDEQHETIVMLRRSA) and 520 to 663 (LEVE…SALS). The interval 485-510 (SAAAPSGNGSTSPLDSPGVGGTSLSE) is disordered.

Belongs to the TRAFAC class myosin-kinesin ATPase superfamily. Kinesin family.

It is found in the cytoplasm. Its subcellular location is the cytoskeleton. In terms of biological role, required for assembly of the mitotic spindle. The sequence is that of Kinesin-like protein KIP2 (KIP2) from Eremothecium gossypii (strain ATCC 10895 / CBS 109.51 / FGSC 9923 / NRRL Y-1056) (Yeast).